The chain runs to 948 residues: Phosphoenolpyruvate carboxylase (948 aa).

Catalysis depends on residues H138 and K610.

It belongs to the PEPCase type 1 family. Requires Mg(2+) as cofactor.

The enzyme catalyses oxaloacetate + phosphate = phosphoenolpyruvate + hydrogencarbonate. Forms oxaloacetate, a four-carbon dicarboxylic acid source for the tricarboxylic acid cycle. This is Phosphoenolpyruvate carboxylase from Streptococcus sanguinis (strain SK36).